Consider the following 499-residue polypeptide: Alpha-L-arabinofuranosidase B (499 aa).

The N-terminal stretch at 1–18 (MFSRRNLVALGLAATVSA) is a signal peptide. Asn83 and Asn202 each carry an N-linked (GlcNAc...) asparagine glycan.

The protein belongs to the glycosyl hydrolase 54 family.

It carries out the reaction Hydrolysis of terminal non-reducing alpha-L-arabinofuranoside residues in alpha-L-arabinosides.. Its pathway is glycan metabolism; L-arabinan degradation. Its function is as follows. Able to hydrolyze 1,5-, 1,3- and 1,2-alpha-linkages not only in L-arabinofuranosyl oligosaccharides, but also in polysac-charides containing terminal non-reducing L-arabinofuranoses in side chains, like L-arabinan, arabinogalactan and arabinoxylan. This chain is Alpha-L-arabinofuranosidase B (abfB), found in Aspergillus niger.